The following is a 325-amino-acid chain: Zinc metalloproteinase/disintegrin (325 aa).

The propeptide occupies 1–39 (KYENVEKGDEAPKKCGVTHTNLESDEPIEKASQLFGTSE). The residue at position 40 (Gln-40) is a Pyrrolidone carboxylic acid. One can recognise a Peptidase M12B domain in the interval 46–242 (RHIELVIVAD…HNPQRILNEP (197 aa)). His-182 is a binding site for Zn(2+). The active site involves Glu-183. Positions 186 and 192 each coordinate Zn(2+). 2 disulfides stabilise this stretch: Cys-197/Cys-221 and Cys-199/Cys-204. A propeptide spanning residues 243–257 (LRTDTVSTPVYGNVL) is cleaved from the precursor. Positions 250 to 322 (TPVYGNVLQN…SECESNPWNF (73 aa)) constitute a Disintegrin domain. Gln-258 is subject to Pyrrolidone carboxylic acid. Disulfide bonds link Cys-264–Cys-287, Cys-278–Cys-284, Cys-283–Cys-308, and Cys-296–Cys-315. The Cell attachment site motif lies at 300–302 (RGD).

Belongs to the venom metalloproteinase (M12B) family. P-II subfamily. P-IIe sub-subfamily. In terms of assembly, heterodimer of bitisgabonin and gabonin-1 (bitisgabonin-1) or gabonin-2 (bitisgabonin-2); disulfide-linked. Zn(2+) serves as cofactor. In terms of tissue distribution, expressed by the venom gland.

It is found in the secreted. Impairs hemostasis in the envenomed animal. In terms of biological role, in dimer with gabonin-1 (bitisgabonin-1), is a potent inhibitor of the adhesion of the RGD-dependent integrin alpha-5/beta-1 (ITGA5/ITGB1) to immobilized fibronectin. Functionally, in dimer with gabonin-2 (bitisgabonin-2), preferentially inhibits the adhesion of the alpha-4/beta-1 (ITGA4/ITGB1) and alpha-9/beta-1 (ITGA9/ITGB1) integrins to VCAM-1 and also acts as a strong antagonist of alpha-5/beta-1 (ITGA5/ITGB1). The polypeptide is Zinc metalloproteinase/disintegrin (Bitis gabonica (Gaboon adder)).